Here is a 235-residue protein sequence, read N- to C-terminus: 2-C-methyl-D-erythritol 4-phosphate cytidylyltransferase (235 aa).

The protein belongs to the IspD/TarI cytidylyltransferase family. IspD subfamily.

The catalysed reaction is 2-C-methyl-D-erythritol 4-phosphate + CTP + H(+) = 4-CDP-2-C-methyl-D-erythritol + diphosphate. It functions in the pathway isoprenoid biosynthesis; isopentenyl diphosphate biosynthesis via DXP pathway; isopentenyl diphosphate from 1-deoxy-D-xylulose 5-phosphate: step 2/6. Catalyzes the formation of 4-diphosphocytidyl-2-C-methyl-D-erythritol from CTP and 2-C-methyl-D-erythritol 4-phosphate (MEP). This chain is 2-C-methyl-D-erythritol 4-phosphate cytidylyltransferase, found in Pseudomonas putida (strain GB-1).